Here is an 88-residue protein sequence, read N- to C-terminus: MKKGIHPENYRTVLFYDSNAKQGFLIRSCARTTTTMKWEDGHEYPVFMCDTSSASHPYYTGKTRQIANEGRASDFVNRYGKFGTLKSK.

Belongs to the bacterial ribosomal protein bL31 family. Type B subfamily. Part of the 50S ribosomal subunit.

This chain is Large ribosomal subunit protein bL31B, found in Pasteurella multocida (strain Pm70).